The chain runs to 140 residues: Small ribosomal subunit protein uS19 (140 aa).

The interval 55-74 (LAEARESGTEETANNPIRTH) is disordered.

Belongs to the universal ribosomal protein uS19 family.

In terms of biological role, protein S19 forms a complex with S13 that binds strongly to the 16S ribosomal RNA. This Halobacterium salinarum (strain ATCC 29341 / DSM 671 / R1) protein is Small ribosomal subunit protein uS19.